We begin with the raw amino-acid sequence, 197 residues long: Protein GrpE (197 aa).

Residues 1 to 43 form a disordered region; that stretch reads MSSKEQKTPDGQAPEEIVTEQHEEVESVESAESAEQVDPRDEE.

It belongs to the GrpE family. As to quaternary structure, homodimer.

The protein localises to the cytoplasm. In terms of biological role, participates actively in the response to hyperosmotic and heat shock by preventing the aggregation of stress-denatured proteins, in association with DnaK and GrpE. It is the nucleotide exchange factor for DnaK and may function as a thermosensor. Unfolded proteins bind initially to DnaJ; upon interaction with the DnaJ-bound protein, DnaK hydrolyzes its bound ATP, resulting in the formation of a stable complex. GrpE releases ADP from DnaK; ATP binding to DnaK triggers the release of the substrate protein, thus completing the reaction cycle. Several rounds of ATP-dependent interactions between DnaJ, DnaK and GrpE are required for fully efficient folding. The protein is Protein GrpE of Cronobacter sakazakii (strain ATCC BAA-894) (Enterobacter sakazakii).